We begin with the raw amino-acid sequence, 451 residues long: Sex peptide receptor-related protein 2 (451 aa).

Over Met-1–Gln-63 the chain is Extracellular. Asn-15 is a glycosylation site (N-linked (GlcNAc...) asparagine). The helical transmembrane segment at Ile-64–Ser-84 threads the bilayer. Topologically, residues Lys-85–Lys-97 are cytoplasmic. Residues Tyr-98 to Phe-118 traverse the membrane as a helical segment. The Extracellular portion of the chain corresponds to Ser-119 to Ser-140. A disulfide bridge connects residues Cys-134 and Cys-225. Residues Met-141–Ala-161 form a helical membrane-spanning segment. Over Gln-162 to Arg-183 the chain is Cytoplasmic. Residues Leu-184 to Tyr-204 traverse the membrane as a helical segment. Residues Glu-205–Leu-251 are Extracellular-facing. A glycan (N-linked (GlcNAc...) asparagine) is linked at Asn-218. Residues Gly-252–Ile-272 form a helical membrane-spanning segment. Residues Arg-273–Ser-301 lie on the Cytoplasmic side of the membrane. The helical transmembrane segment at Leu-302–Met-322 threads the bilayer. Residues Gly-323 to Lys-334 lie on the Extracellular side of the membrane. A helical transmembrane segment spans residues Ile-335–Ile-355. The Cytoplasmic portion of the chain corresponds to Ala-356–Asp-451.

It belongs to the G-protein coupled receptor 1 family. Expressed in head neurons including the ASE sensory neurons and the ASI and AWB chemosensory neurons, the midbody neurons SDQ, and motor neurons in the tail.

The protein localises to the cell membrane. Functionally, G-protein coupled receptor for the neuropeptide like protein nlp-38. Plays a role in several types of aversive gustatory associative learning including gustatory plasticity and salt avoidance learning. Its role in salt avoidance learning may be through activation of the transcription factor crh-1/CREB and de novo transcription and translation, which in turn promotes the formation of long-term memory. The polypeptide is Sex peptide receptor-related protein 2 (Caenorhabditis elegans).